Consider the following 588-residue polypeptide: MATCSAYLCCPATSASLKKRVFPDGSAGFLFFGGRRLSNRLVTPKSVIRADLNSMVSDMSTNAPKGLFPPEPEHYRGPKLKVAIIGAGLAGMSTAVELLDQGHEVDIYESRTFIGGKVGSFVDKRGNHIEMGLHVFFGCYNNLFRLMKKVGAEKNLLVKEHTHTFVNKGGEIGELDFRFPVGAPLHGINAFLSTNQLKTYDKARNAVALALSPVVRALVDPDGALQQIRDLDSVSFSDWFMSKGGTRASIQRMWDPVAYALGFIDCDNISARCMLTIFALFATKTEASLLRMLKGSPDVYLSGPIKKYIIDKGGRFHLRWGCREVLYETSSDGSMYVSGLAMSKATQKKIVKADAYVAACVVPGIKRLVPQKWRELEFFGNIYKLIGVPVVTVQLRYNGWVTELQDLERSRQSKRATGLDNLLYTPDADFSCFADLALASPEDYYIEGQGSLLQCVLTPGDPYMPLPNEEIIRRVSKQVLALFPSSQGLEVTWSSVVKIGQSLYREGPGKDPFRPDQKTPVENFFLAGSYTKQDYIDSMEGATLSGRQASAYICDAGEQLLALRKKIAAAELNEISKGVSLSDELSLV.

The N-terminal 49 residues, 1 to 49, are a transit peptide targeting the chloroplast and chromoplast; the sequence is MATCSAYLCCPATSASLKKRVFPDGSAGFLFFGGRRLSNRLVTPKSVIR.

It belongs to the zeta carotene desaturase family. As to quaternary structure, monomer and dimer. Requires decylplastoquinone as cofactor. The cofactor is 6-decylubiquinone.

The protein localises to the plastid. It is found in the chloroplast. The protein resides in the chromoplast. The catalysed reaction is 9,9'-di-cis-zeta-carotene + 2 a quinone = 7,7',9,9'-tetra-cis-lycopene + 2 a quinol. It functions in the pathway carotenoid biosynthesis; lycopene biosynthesis. In terms of biological role, catalyzes the conversion of zeta-carotene to lycopene via the intermediary of neurosporene. It carries out two consecutive desaturations (introduction of double bonds) at positions C-7 and C-7'. Shows stereoselectivity toward trans C15-C15'zeta-carotene double bond. The zeta-carotene produced by the phytoene desaturase PDS has a C15-C15' double bond in the cis configuration and it requires isomerization before being recognized as substrate by ZDS. No activity with all-trans-zeta-carotene. The main product is 7,9,7',9'-tetra-cis-lycopene (pro-lycopene). The polypeptide is Zeta-carotene desaturase, chloroplastic/chromoplastic (ZDS) (Capsicum annuum (Capsicum pepper)).